Here is a 181-residue protein sequence, read N- to C-terminus: Peptidyl-tRNA hydrolase (181 aa).

Y14 serves as a coordination point for tRNA. Residue H19 is the Proton acceptor of the active site. Positions 60, 62, and 108 each coordinate tRNA.

It belongs to the PTH family. Monomer.

It is found in the cytoplasm. The catalysed reaction is an N-acyl-L-alpha-aminoacyl-tRNA + H2O = an N-acyl-L-amino acid + a tRNA + H(+). In terms of biological role, hydrolyzes ribosome-free peptidyl-tRNAs (with 1 or more amino acids incorporated), which drop off the ribosome during protein synthesis, or as a result of ribosome stalling. Functionally, catalyzes the release of premature peptidyl moieties from peptidyl-tRNA molecules trapped in stalled 50S ribosomal subunits, and thus maintains levels of free tRNAs and 50S ribosomes. The chain is Peptidyl-tRNA hydrolase from Metamycoplasma arthritidis (strain 158L3-1) (Mycoplasma arthritidis).